A 343-amino-acid polypeptide reads, in one-letter code: Anthranilate phosphoribosyltransferase (343 aa).

5-phospho-alpha-D-ribose 1-diphosphate contacts are provided by residues Gly84, 87-88 (GD), Thr92, 94-97 (NIST), 112-120 (KHGNRGVSS), and Ser124. Gly84 lines the anthranilate pocket. Residue Ser96 participates in Mg(2+) binding. Asn115 lines the anthranilate pocket. An anthranilate-binding site is contributed by Arg170. Mg(2+) is bound by residues Asp229 and Glu230.

Belongs to the anthranilate phosphoribosyltransferase family. In terms of assembly, homodimer. It depends on Mg(2+) as a cofactor.

The enzyme catalyses N-(5-phospho-beta-D-ribosyl)anthranilate + diphosphate = 5-phospho-alpha-D-ribose 1-diphosphate + anthranilate. Its pathway is amino-acid biosynthesis; L-tryptophan biosynthesis; L-tryptophan from chorismate: step 2/5. In terms of biological role, catalyzes the transfer of the phosphoribosyl group of 5-phosphorylribose-1-pyrophosphate (PRPP) to anthranilate to yield N-(5'-phosphoribosyl)-anthranilate (PRA). The chain is Anthranilate phosphoribosyltransferase from Burkholderia pseudomallei (strain 1106a).